We begin with the raw amino-acid sequence, 47 residues long: LLGRCKVKSNRFNGPCLTDTHCSTVCRGEGYKGGDCHGLRRRCMCLC.

Intrachain disulfides connect cysteine 5/cysteine 47, cysteine 16/cysteine 36, cysteine 22/cysteine 43, and cysteine 26/cysteine 45.

It belongs to the DEFL family.

Fabatins have antibacterial activity against Gram-positive and Gram-negative bacteria. High activity against P.aeruginosa. No activity against S.cerevisiae and C.albicans. The sequence is that of Defensin-like protein 2 from Vicia faba (Broad bean).